The chain runs to 360 residues: MASSSSNRQFSHRNANTFLTYPKCPENPEIACQMIWELVVRWIPKYILCAREAHKDGSLHLHALLQTEKPVRISDSRFFDINGFHPNIQSAKSVNRVRDYILKEPLAVFERGTFIPRKSPFLGKSDSEVKEKKPSKDEIMRDIISHSTSKEEYLSMIQKELPFDWSTKLQYFEYSANKLFPEIQEEFTNPHPPSSPDLLCNESINDWLQPNIFQSSDERSRKQSLYIVGPTRTGKSTWARSLGVHNYWQNNVDWSSYNEDAIYNIVDDIPFKFCPCWKQLVGCQRDFIVNPKYGKKKKVQKKSKPTIILANSDEDWMKEMTPGQLEYFEANCIIYIMSPGEKWYSPPELPPTEAVHSDRS.

The 104-residue stretch at 11-114 folds into the CRESS-DNA virus Rep endonuclease domain; it reads SHRNANTFLT…PLAVFERGTF (104 aa). The short motif at 18–21 is the RCR-1 element; sequence FLTY. The a divalent metal cation site is built by Glu-52, His-60, and His-62. Positions 60 to 62 match the RCR-2 motif; that stretch reads HLH. Catalysis depends on Tyr-100, which acts as the For DNA cleavage activity. Positions 100–103 match the RCR-3 motif; the sequence is YILK. Glu-104 is a binding site for a divalent metal cation. The tract at residues 175-187 is oligomerization; that stretch reads SANKLFPEIQEEF. 229–236 serves as a coordination point for ATP; the sequence is GPTRTGKS. The transactivation stretch occupies residues 252–270; that stretch reads VDWSSYNEDAIYNIVDDIP. The short motif at 292-303 is the Nuclear localization signal element; that stretch reads KYGKKKKVQKKS.

This sequence belongs to the geminiviridae Rep protein family. As to quaternary structure, homooligomer. Rep binds to repeated DNA motifs (iterons). Forms the O-complex, which is a Rep-DNA complex involved in the initiation of RCR. Part of the C- and V-complexes which are RepA-Rep-DNA complexes involved in the c-sense and v-sense transcription. It depends on Mg(2+) as a cofactor. Mn(2+) serves as cofactor.

It is found in the host nucleus. Its function is as follows. Essential for the replication of viral ssDNA. The closed circular ssDNA genome is first converted to a superhelical dsDNA. Rep binds a specific region at the genome origin of replication. It introduces an endonucleolytic nick within the conserved sequence 5'-TAATATTAC-3' in the intergenic region of the genome present in all geminiviruses, thereby initiating the rolling circle replication (RCR). Following cleavage, binds covalently to the 5'-phosphate of DNA as a tyrosyl ester. The cleavage gives rise to a free 3'-OH that serves as a primer for the cellular DNA polymerase. The polymerase synthesizes the (+) strand DNA by rolling circle mechanism. After one round of replication, a Rep-catalyzed nucleotidyl transfer reaction releases a circular single-stranded virus genome, thereby terminating the replication. Displays origin-specific DNA cleavage, nucleotidyl transferase, ATPase and helicase activities. Acts as an inhibitor of C-sense gene transcription. This chain is Replication-associated protein, found in Avena sativa (Oat).